The chain runs to 591 residues: Aspartate--tRNA(Asp/Asn) ligase (591 aa).

E176 lines the L-aspartate pocket. Positions 200–203 are aspartate; it reads QLFK. Residue R222 coordinates L-aspartate. Residues 222-224 and Q231 contribute to the ATP site; that span reads RDE. H450 provides a ligand contact to L-aspartate. E484 lines the ATP pocket. R491 serves as a coordination point for L-aspartate. 536–539 contributes to the ATP binding site; that stretch reads GLDR.

This sequence belongs to the class-II aminoacyl-tRNA synthetase family. Type 1 subfamily. Homodimer.

It localises to the cytoplasm. The enzyme catalyses tRNA(Asx) + L-aspartate + ATP = L-aspartyl-tRNA(Asx) + AMP + diphosphate. Functionally, aspartyl-tRNA synthetase with relaxed tRNA specificity since it is able to aspartylate not only its cognate tRNA(Asp) but also tRNA(Asn). Reaction proceeds in two steps: L-aspartate is first activated by ATP to form Asp-AMP and then transferred to the acceptor end of tRNA(Asp/Asn). The polypeptide is Aspartate--tRNA(Asp/Asn) ligase (Bacillus cereus (strain ATCC 10987 / NRS 248)).